The chain runs to 502 residues: ATP synthase subunit beta (502 aa).

153 to 160 (GGAGVGKT) lines the ATP pocket.

Belongs to the ATPase alpha/beta chains family. F-type ATPases have 2 components, CF(1) - the catalytic core - and CF(0) - the membrane proton channel. CF(1) has five subunits: alpha(3), beta(3), gamma(1), delta(1), epsilon(1). CF(0) has three main subunits: a(1), b(2) and c(9-12). The alpha and beta chains form an alternating ring which encloses part of the gamma chain. CF(1) is attached to CF(0) by a central stalk formed by the gamma and epsilon chains, while a peripheral stalk is formed by the delta and b chains.

The protein resides in the cell membrane. The enzyme catalyses ATP + H2O + 4 H(+)(in) = ADP + phosphate + 5 H(+)(out). Produces ATP from ADP in the presence of a proton gradient across the membrane. The catalytic sites are hosted primarily by the beta subunits. This chain is ATP synthase subunit beta, found in Amoebophilus asiaticus (strain 5a2).